Here is a 137-residue protein sequence, read N- to C-terminus: MLQPKRTKFRKMQKGRNRGLALRGNQVSFGEFGLKSTERGRLTARQIEAARRAMTRHIKRGGRIWIRVFPDKPITQKPLEVRQGKGKGSVEYWVAQIQPGKMLYEVEGVSEQLAREAFALAAAKLPLSTTFVTRTVM.

This sequence belongs to the universal ribosomal protein uL16 family. In terms of assembly, part of the 50S ribosomal subunit.

Binds 23S rRNA and is also seen to make contacts with the A and possibly P site tRNAs. The sequence is that of Large ribosomal subunit protein uL16 from Marinomonas sp. (strain MWYL1).